The primary structure comprises 463 residues: L-seryl-tRNA(Sec) selenium transferase (463 aa).

At Lys295 the chain carries N6-(pyridoxal phosphate)lysine.

Belongs to the SelA family. Homodecamer; pentamer of dimers. Binds only one seryl-tRNA(Sec) per dimer. Requires pyridoxal 5'-phosphate as cofactor.

The protein localises to the cytoplasm. It carries out the reaction L-seryl-tRNA(Sec) + selenophosphate + H(+) = L-selenocysteinyl-tRNA(Sec) + phosphate. The protein operates within aminoacyl-tRNA biosynthesis; selenocysteinyl-tRNA(Sec) biosynthesis; selenocysteinyl-tRNA(Sec) from L-seryl-tRNA(Sec) (bacterial route): step 1/1. Its function is as follows. Converts seryl-tRNA(Sec) to selenocysteinyl-tRNA(Sec) required for selenoprotein biosynthesis. This chain is L-seryl-tRNA(Sec) selenium transferase, found in Escherichia coli (strain SMS-3-5 / SECEC).